A 419-amino-acid polypeptide reads, in one-letter code: E3 ubiquitin-protein ligase RNF130 (419 aa).

A signal peptide spans 1-27 (MSGAARAGPARLAALALLTCSLWPTRA). Residues 28–194 (DNASQEYYTA…MPPKNFSRGS (167 aa)) lie on the Extracellular side of the membrane. N-linked (GlcNAc...) asparagine glycans are attached at residues Asn-29, Asn-40, Asn-112, Asn-135, Asn-172, and Asn-189. A PA domain is found at 105 to 176 (IALLQRGNCT…SYLEKNISVQ (72 aa)). Residues 195 to 217 (LVFVSISFIVLMIISSAWLIFYF) traverse the membrane as a helical segment. Topologically, residues 218–419 (IQKIRYTNAR…SLNANEVEWF (202 aa)) are cytoplasmic. The RING-type zinc finger occupies 264–305 (CAVCIESYKQNDVVRVLPCKHVFHKSCVDPWLSEHCTCPMCK).

As to expression, expression is highest in liver, with lesser amounts in the lung, spleen, brain, heart, kidney and testis.

Its subcellular location is the membrane. The protein localises to the cytoplasm. The enzyme catalyses S-ubiquitinyl-[E2 ubiquitin-conjugating enzyme]-L-cysteine + [acceptor protein]-L-lysine = [E2 ubiquitin-conjugating enzyme]-L-cysteine + N(6)-ubiquitinyl-[acceptor protein]-L-lysine.. Its pathway is protein modification; protein ubiquitination. Acts as an E3 ubiquitin-protein ligase. May have a role during the programmed cell death of hematopoietic cells. The chain is E3 ubiquitin-protein ligase RNF130 from Mus musculus (Mouse).